Here is a 116-residue protein sequence, read N- to C-terminus: Large ribosomal subunit protein bL20 (116 aa).

It belongs to the bacterial ribosomal protein bL20 family.

Its function is as follows. Binds directly to 23S ribosomal RNA and is necessary for the in vitro assembly process of the 50S ribosomal subunit. It is not involved in the protein synthesizing functions of that subunit. This is Large ribosomal subunit protein bL20 from Bacteroides fragilis (strain ATCC 25285 / DSM 2151 / CCUG 4856 / JCM 11019 / LMG 10263 / NCTC 9343 / Onslow / VPI 2553 / EN-2).